The sequence spans 196 residues: Pyridoxal 5'-phosphate synthase subunit PdxT (196 aa).

Residue 46–48 (GES) participates in L-glutamine binding. The active-site Nucleophile is C78. L-glutamine contacts are provided by residues R105 and 134–135 (IR). Residues H170 and E172 each act as charge relay system in the active site.

The protein belongs to the glutaminase PdxT/SNO family. As to quaternary structure, in the presence of PdxS, forms a dodecamer of heterodimers. Only shows activity in the heterodimer.

The enzyme catalyses aldehydo-D-ribose 5-phosphate + D-glyceraldehyde 3-phosphate + L-glutamine = pyridoxal 5'-phosphate + L-glutamate + phosphate + 3 H2O + H(+). The catalysed reaction is L-glutamine + H2O = L-glutamate + NH4(+). The protein operates within cofactor biosynthesis; pyridoxal 5'-phosphate biosynthesis. Functionally, catalyzes the hydrolysis of glutamine to glutamate and ammonia as part of the biosynthesis of pyridoxal 5'-phosphate. The resulting ammonia molecule is channeled to the active site of PdxS. This Pelotomaculum thermopropionicum (strain DSM 13744 / JCM 10971 / SI) protein is Pyridoxal 5'-phosphate synthase subunit PdxT.